Consider the following 148-residue polypeptide: Urease accessory protein UreE (148 aa).

This sequence belongs to the UreE family.

It localises to the cytoplasm. Involved in urease metallocenter assembly. Binds nickel. Probably functions as a nickel donor during metallocenter assembly. The chain is Urease accessory protein UreE from Lysinibacillus sphaericus (strain C3-41).